Consider the following 357-residue polypeptide: Hemolysin VllY (357 aa).

2 consecutive VOC domains span residues 12 to 132 (GFEF…FVDR) and 162 to 313 (EIDH…IFTQ). Fe cation contacts are provided by H165, H243, and E322.

The protein belongs to the 4HPPD family. The cofactor is Fe cation.

In Vibrio vulnificus (strain CMCP6), this protein is Hemolysin VllY (vllY).